The sequence spans 147 residues: Testis-expressed protein 29 (147 aa).

Residues 1–57 are Extracellular-facing; the sequence is MRYAPEFKKSPSHLLKKFAVCDIPLYDICDYNVSRDRCKELGCCFYKGICYEKAVPS. A helical membrane pass occupies residues 58–78; the sequence is YVQVFSALIVIIAGAFVITII. Topologically, residues 79 to 147 are cytoplasmic; sequence YRVIQESRRE…IVTEEEETED (69 aa). Positions 86-147 are disordered; the sequence is RREKEVPTEA…IVTEEEETED (62 aa). Positions 99–108 are enriched in polar residues; it reads AKSSVQVETQ. Positions 109 to 120 are enriched in low complexity; the sequence is PPSSAGAGSKAP. The segment covering 125–135 has biased composition (basic and acidic residues); the sequence is PQSKESGREDA.

The protein resides in the membrane. This is Testis-expressed protein 29 (TEX29) from Bos taurus (Bovine).